The primary structure comprises 1935 residues: Myosin heavy chain, fast skeletal muscle (1935 aa).

The 50-residue stretch at 32–81 (DAKTAFFVVDPDEMYLKGTLVSKEGGKATVKTHSGKTVTVKEDEIFPMNP) folds into the Myosin N-terminal SH3-like domain. A Myosin motor domain is found at 85-779 (DKIEDMAMMT…LLGALEEMRD (695 aa)). Lys129 carries the N6,N6,N6-trimethyllysine modification. Position 178–185 (178–185 (GESGAGKT)) interacts with ATP. Actin-binding regions lie at residues 659–681 (LMTN…ESKT) and 761–775 (HTKV…GALE). Residues 782–811 (LALLVTMTQALCRGYVMRKEFVKMMERRES) form the IQ domain. The tract at residues 812–839 (IYSIQYNIRSFMNVKHWPWMKLYFKIKP) is hinge. Residues 840–1935 (LLKSAETEKE…RDAGKSKDEE (1096 aa)) adopt a coiled-coil conformation. 2 disordered regions span residues 1589-1608 (RNSQ…EVRS) and 1902-1935 (HELE…KDEE). Residues 1592 to 1603 (QRVIDSMQSTLD) are compositionally biased toward polar residues. Basic and acidic residues-rich tracts occupy residues 1902–1913 (HELEEAQERADV) and 1924–1935 (KSRDAGKSKDEE).

Belongs to the TRAFAC class myosin-kinesin ATPase superfamily. Myosin family. In terms of assembly, muscle myosin is a hexameric protein that consists of 2 heavy chain subunits (MHC), 2 alkali light chain subunits (MLC) and 2 regulatory light chain subunits (MLC-2).

The protein resides in the cytoplasm. The protein localises to the myofibril. Functionally, muscle contraction. The chain is Myosin heavy chain, fast skeletal muscle from Cyprinus carpio (Common carp).